The sequence spans 147 residues: MKTLFLLAILALVASTTFAQYSVGGGYNDVGGGGGSQQCPQERPNLGSCKDYVMERCFTMKDFPLTWPTKWWKGGCEQEVREKCCQQLSQIAPQCRCDAIRGVIQGKLGGIFGIGGGDVFKQIQRAQILPSKCNMGADCKFPSGYYW.

The signal sequence occupies residues 1–19; the sequence is MKTLFLLAILALVASTTFA. Residues 20–28 constitute a propeptide that is removed on maturation; it reads QYSVGGGYN.

In terms of processing, five disulfide bonds are present. As to expression, found in endosperm and aleurone layer of developing kernels, but not in the embryo.

The protein localises to the membrane. Its subcellular location is the secreted. The protein resides in the extracellular space. In terms of biological role, acts as a membranotoxin, probably through its antibacterial and antifungal activities, contributing to the defense mechanism of the plant against predators. Forms monovalent cation-selective ion channels in membranes. Contributes to grain texture and hardness. In Hordeum vulgare (Barley), this protein is Hordoindoline-B1 (HINB-1).